The following is a 1863-amino-acid chain: Breast cancer type 1 susceptibility protein homolog (1863 aa).

Met-1 is subject to N-acetylmethionine. An RING-type zinc finger spans residues 24–65 (CPICLELIKEPVSTKCDHIFCRFCMLKLLNQKKGPSQCPLCK). Residue Lys-109 forms a Glycyl lysine isopeptide (Lys-Gly) (interchain with G-Cter in SUMO2) linkage. A Phosphoserine modification is found at Ser-114. Composition is skewed to basic and acidic residues over residues 231-240 (KDITNTEHHQ) and 248-260 (TTEKHATERHPEK). A disordered region spans residues 231-266 (KDITNTEHHQSSNNDLNTTEKHATERHPEKYQGSSV). Lys-300 is covalently cross-linked (Glycyl lysine isopeptide (Lys-Gly) (interchain with G-Cter in SUMO2)). The interval 305–336 (NKSKQPGLARSQHNRWTGSKETCNDRQTPSTE) is disordered. A compositionally biased stretch (polar residues) spans 318-334 (NRWTGSKETCNDRQTPS). Lys-338 participates in a covalent cross-link: Glycyl lysine isopeptide (Lys-Gly) (interchain with G-Cter in SUMO2). A phosphoserine mark is found at Ser-394, Ser-397, Ser-422, and Ser-433. Glycyl lysine isopeptide (Lys-Gly) (interchain with G-Cter in SUMO2) cross-links involve residues Lys-442, Lys-458, and Lys-518. A Phosphoserine modification is found at Ser-550. Lys-582 is covalently cross-linked (Glycyl lysine isopeptide (Lys-Gly) (interchain with G-Cter in SUMO2)). A disordered region spans residues 653 to 699 (NYNQMPVRHSRNLQLMEDKESATGAKKSNKPNEQTSKRHASDTFPEL). 3 positions are modified to phosphoserine: Ser-693, Ser-707, and Ser-724. Residues Lys-733 and Lys-738 each participate in a glycyl lysine isopeptide (Lys-Gly) (interchain with G-Cter in SUMO2) cross-link. 2 positions are modified to phosphoserine: Ser-752 and Ser-839. The interval 886–914 (AHSRSLKKQSPKVTSECEQKEENQGKKES) is disordered. Over residues 900–914 (SECEQKEENQGKKES) the composition is skewed to basic and acidic residues. Glycyl lysine isopeptide (Lys-Gly) (interchain with G-Cter in SUMO2) cross-links involve residues Lys-917 and Lys-986. Residue Ser-987 is modified to Phosphoserine; by CHEK2. Position 1008 is a phosphoserine (Ser-1008). Residues 1042 to 1059 (SNINEVGSSTNEVGSSIN) are compositionally biased toward polar residues. The tract at residues 1042–1062 (SNINEVGSSTNEVGSSINEVG) is disordered. A Glycyl lysine isopeptide (Lys-Gly) (interchain with G-Cter in SUMO2) cross-link involves residue Lys-1079. Phosphoserine occurs at positions 1143, 1189, 1191, 1211, 1217, 1218, 1280, 1328, 1336, 1342, and 1387. A disordered region spans residues 1323-1397 (RMRHQSESQG…QSEILTTQQR (75 aa)). Residues 1342–1360 (SDDEERGTGLEEDNQEEQS) show a composition bias toward acidic residues. Residues 1373-1397 (ESETSVSEDCSRLSSQSEILTTQQR) show a composition bias toward polar residues. At Thr-1394 the chain carries Phosphothreonine. Residues 1397–1424 (RDTMQDNLIKLQQEMAELEAVLEQHGSQ) are interaction with PALB2. Phosphoserine occurs at positions 1423, 1457, 1524, and 1542. The tract at residues 1442 to 1501 (LRNPEQSTSEKAVLTSQKSSEYPINQNPEGLSADKFEVSADSSTSKNKEPGVERSSPSKC) is disordered. The span at 1445–1470 (PEQSTSEKAVLTSQKSSEYPINQNPE) shows a compositional bias: polar residues. The interval 1540–1618 (EKSGPHDLME…ESAQSPAAAH (79 aa)) is disordered. Residues 1607 to 1618 (VAESAQSPAAAH) show a composition bias toward polar residues. 2 BRCT domains span residues 1642–1736 (STER…DFEV) and 1756–1855 (PDRK…TYLI).

In terms of assembly, heterodimer with BARD1. Part of the BRCA1-associated genome surveillance complex (BASC), which contains BRCA1, MSH2, MSH6, MLH1, ATM, BLM, PMS2 and the MRE11-RAD50-NBN protein (MRN) complex. This association could be a dynamic process changing throughout the cell cycle and within subnuclear domains. Component of the BRCA1-A complex, at least composed of BRCA1, BARD1, UIMC1/RAP80, ABRAXAS1, BRCC3/BRCC36, BABAM2 and BABAM1/NBA1. Interacts (via the BRCT domains) with ABRAXAS1 (phosphorylated form); this is important for recruitment to sites of DNA damage. Can form a heterotetramer with two molecules of ABRAXAS1 (phosphorylated form). Component of the BRCA1-RBBP8 complex. Interacts (via the BRCT domains) with RBBP8 ('Ser-327' phosphorylated form); the interaction ubiquitinates RBBP8, regulates CHEK1 activation, and involves RBBP8 in BRCA1-dependent G2/M checkpoint control on DNA damage. Associates with RNA polymerase II holoenzyme. Interacts with SMC1A, NELFB, DCLRE1C, CLSPN. CHEK1, CHEK2, BAP1, BRCC3, UBXN1 and PCLAF. Interacts (via BRCT domains) with BRIP1 (phosphorylated form). Interacts with FANCD2 (ubiquitinated form). Interacts with H2AX (phosphorylated on 'Ser-140'). Interacts (via the BRCT domains) with ACACA (phosphorylated form); the interaction prevents dephosphorylation of ACACA. Part of a BRCA complex containing BRCA1, BRCA2 and PALB2. Interacts directly with PALB2; the interaction is essential for its function in HRR. Interacts directly with BRCA2; the interaction occurs only in the presence of PALB2 which serves as the bridging protein. Interacts (via the BRCT domains) with LMO4; the interaction represses the transcriptional activity of BRCA1. Interacts (via the BRCT domains) with CCAR2 (via N-terminus); the interaction represses the transcriptional activator activity of BRCA1. Interacts with EXD2. Interacts (via C-terminus) with DHX9; this interaction is direct and links BRCA1 to the RNA polymerase II holoenzyme. Interacts with DNA helicase ZGRF1; the interaction is increased following DNA damage induction. Post-translationally, phosphorylated in response to IR, UV, and various stimuli that cause checkpoint activation, probably by ATM or ATR. Phosphorylation at Ser-987 by CHEK2 regulates mitotic spindle assembly. Phosphorylation by AURKA regulates centrosomal microtubule nucleation. In terms of processing, autoubiquitinated, undergoes 'Lys-6'-linked polyubiquitination. 'Lys-6'-linked polyubiquitination does not promote degradation.

Its subcellular location is the nucleus. The protein localises to the chromosome. The protein resides in the cytoplasm. The catalysed reaction is S-ubiquitinyl-[E2 ubiquitin-conjugating enzyme]-L-cysteine + [acceptor protein]-L-lysine = [E2 ubiquitin-conjugating enzyme]-L-cysteine + N(6)-ubiquitinyl-[acceptor protein]-L-lysine.. It participates in protein modification; protein ubiquitination. In terms of biological role, E3 ubiquitin-protein ligase that specifically mediates the formation of 'Lys-6'-linked polyubiquitin chains and plays a central role in DNA repair by facilitating cellular responses to DNA damage. It is unclear whether it also mediates the formation of other types of polyubiquitin chains. The BRCA1-BARD1 heterodimer coordinates a diverse range of cellular pathways such as DNA damage repair, ubiquitination and transcriptional regulation to maintain genomic stability. Regulates centrosomal microtubule nucleation. Required for appropriate cell cycle arrests after ionizing irradiation in both the S-phase and the G2 phase of the cell cycle. Required for FANCD2 targeting to sites of DNA damage. Inhibits lipid synthesis by binding to inactive phosphorylated ACACA and preventing its dephosphorylation. Contributes to homologous recombination repair (HRR) via its direct interaction with PALB2, fine-tunes recombinational repair partly through its modulatory role in the PALB2-dependent loading of BRCA2-RAD51 repair machinery at DNA breaks. Component of the BRCA1-RBBP8 complex which regulates CHEK1 activation and controls cell cycle G2/M checkpoints on DNA damage via BRCA1-mediated ubiquitination of RBBP8. Acts as a transcriptional activator. The sequence is that of Breast cancer type 1 susceptibility protein homolog (BRCA1) from Macaca mulatta (Rhesus macaque).